Consider the following 425-residue polypeptide: 3-phosphoshikimate 1-carboxyvinyltransferase (425 aa).

The 3-phosphoshikimate site is built by K23, S24, and R28. K23 is a phosphoenolpyruvate binding site. 2 residues coordinate phosphoenolpyruvate: G96 and R124. 3-phosphoshikimate-binding residues include T170, S171, Q172, S198, D314, and K341. Phosphoenolpyruvate is bound at residue Q172. The active-site Proton acceptor is D314. Positions 345, 386, and 411 each coordinate phosphoenolpyruvate.

This sequence belongs to the EPSP synthase family. In terms of assembly, monomer.

Its subcellular location is the cytoplasm. It catalyses the reaction 3-phosphoshikimate + phosphoenolpyruvate = 5-O-(1-carboxyvinyl)-3-phosphoshikimate + phosphate. The protein operates within metabolic intermediate biosynthesis; chorismate biosynthesis; chorismate from D-erythrose 4-phosphate and phosphoenolpyruvate: step 6/7. Catalyzes the transfer of the enolpyruvyl moiety of phosphoenolpyruvate (PEP) to the 5-hydroxyl of shikimate-3-phosphate (S3P) to produce enolpyruvyl shikimate-3-phosphate and inorganic phosphate. The sequence is that of 3-phosphoshikimate 1-carboxyvinyltransferase from Nostoc sp. (strain PCC 7120 / SAG 25.82 / UTEX 2576).